Here is a 356-residue protein sequence, read N- to C-terminus: Malate dehydrogenase, glyoxysomal (356 aa).

The N-terminal 36 residues, 1–36, are a transit peptide targeting the glyoxysome; that stretch reads MQPIPDVNQRIARISAHLHPPKSQMEESSALRRANC. Residues 51–57 and aspartate 77 contribute to the NAD(+) site; that span reads GAAGGIG. Residues arginine 124 and arginine 130 each contribute to the substrate site. NAD(+)-binding positions include asparagine 137 and 160-162; that span reads ISN. Residues asparagine 162 and arginine 196 each contribute to the substrate site. Histidine 220 (proton acceptor) is an active-site residue. Methionine 271 contacts NAD(+).

The protein belongs to the LDH/MDH superfamily. MDH type 1 family. In terms of assembly, homodimer.

Its subcellular location is the glyoxysome. It carries out the reaction (S)-malate + NAD(+) = oxaloacetate + NADH + H(+). In Citrullus lanatus (Watermelon), this protein is Malate dehydrogenase, glyoxysomal.